The following is a 629-amino-acid chain: Glycerol-3-phosphate dehydrogenase SDP6, mitochondrial (629 aa).

Residues 1 to 48 (MSLASIRRLAAGAAVIAAASGGAVYLSPSVASSDKGGGPILDSLRRRL) constitute a mitochondrion transit peptide. 75-103 (DVLVIGGGATGSGVALDAVTRGLRVGLVE) contacts FAD.

This sequence belongs to the FAD-dependent glycerol-3-phosphate dehydrogenase family. Requires FAD as cofactor. In terms of tissue distribution, expressed in germinating seedlings. Also detected in roots, leaves, flowers, developing siliques and germinating seeds.

It is found in the mitochondrion inner membrane. It catalyses the reaction a quinone + sn-glycerol 3-phosphate = dihydroxyacetone phosphate + a quinol. It participates in polyol metabolism; glycerol degradation via glycerol kinase pathway; glycerone phosphate from sn-glycerol 3-phosphate (anaerobic route): step 1/1. In terms of biological role, required for glycerol catabolism and involved in NADH/NAD(+) homeostasis. Essential for postgerminative growth and seedling establishment. This Arabidopsis thaliana (Mouse-ear cress) protein is Glycerol-3-phosphate dehydrogenase SDP6, mitochondrial.